The primary structure comprises 241 residues: uncharacterized protein (241 aa).

Positions 22-78 constitute a Cupin type-2 domain; sequence SHKHAYSQFLFPLEGSIDLETEGRQVKLNPDHFLYIPPQCEHRFRSIGRNECLVLDV. One can recognise an HTH araC/xylS-type domain in the interval 137 to 235; that stretch reads YASIAYIHSH…GMPPRLYRNT (99 aa). 2 consecutive DNA-binding regions (H-T-H motif) follow at residues 154-175 and 202-225; these read KKLA…KKQT and LTVV…TKST.

This is an uncharacterized protein from Bacillus subtilis (strain 168).